The following is a 144-amino-acid chain: 3-hydroxyacyl-[acyl-carrier-protein] dehydratase FabZ (144 aa).

Residue His48 is part of the active site.

Belongs to the thioester dehydratase family. FabZ subfamily.

The protein resides in the cytoplasm. The enzyme catalyses a (3R)-hydroxyacyl-[ACP] = a (2E)-enoyl-[ACP] + H2O. Functionally, involved in unsaturated fatty acids biosynthesis. Catalyzes the dehydration of short chain beta-hydroxyacyl-ACPs and long chain saturated and unsaturated beta-hydroxyacyl-ACPs. The polypeptide is 3-hydroxyacyl-[acyl-carrier-protein] dehydratase FabZ (Bacillus thuringiensis (strain Al Hakam)).